The primary structure comprises 190 residues: WYSSMFAANIKQEPMSHHHHHSHHHGHHHMLQHSNSNRNASSPRQSPLPSPNPPSSSNLHLEQYLKQQHQQHQQQQQQPMDTLCAAAMTPSPSNNDQNSPLTPPGLPNPMQIIMPANMRPATQPTPTIATPTTTSSAIVALQTNDKLQALTPPMDVTPPKSPAKSQQSCAEPEKDHDLISNSSEDMKYMA.

3 disordered regions span residues E13–L59, A86–M110, and Q142–A190. Residues H17–L31 are compositionally biased toward basic residues. A compositionally biased stretch (polar residues) spans P90–P100. Over residues E171–A190 the composition is skewed to basic and acidic residues.

Belongs to the hunchback C2H2-type zinc-finger protein family.

The protein resides in the nucleus. Its function is as follows. Gap class segmentation protein that controls development of head structures. The protein is Protein hunchback (hb) of Scaptomyza crassifemur (Fruit fly).